Here is a 375-residue protein sequence, read N- to C-terminus: Aminomethyltransferase (375 aa).

Belongs to the GcvT family. The glycine cleavage system is composed of four proteins: P, T, L and H.

The catalysed reaction is N(6)-[(R)-S(8)-aminomethyldihydrolipoyl]-L-lysyl-[protein] + (6S)-5,6,7,8-tetrahydrofolate = N(6)-[(R)-dihydrolipoyl]-L-lysyl-[protein] + (6R)-5,10-methylene-5,6,7,8-tetrahydrofolate + NH4(+). The glycine cleavage system catalyzes the degradation of glycine. This Cupriavidus pinatubonensis (strain JMP 134 / LMG 1197) (Cupriavidus necator (strain JMP 134)) protein is Aminomethyltransferase.